The chain runs to 284 residues: Formamidopyrimidine-DNA glycosylase (284 aa).

Catalysis depends on Pro-2, which acts as the Schiff-base intermediate with DNA. The active-site Proton donor is Glu-3. Lys-58 (proton donor; for beta-elimination activity) is an active-site residue. Residues His-101, Arg-120, and Arg-163 each coordinate DNA. An FPG-type zinc finger spans residues 248-284 (RVYDRENAPCVTAGCPDVVRRVVQSGRSSFYCPSCQR). Arg-274 serves as the catalytic Proton donor; for delta-elimination activity.

It belongs to the FPG family. Monomer. Zn(2+) serves as cofactor.

It carries out the reaction Hydrolysis of DNA containing ring-opened 7-methylguanine residues, releasing 2,6-diamino-4-hydroxy-5-(N-methyl)formamidopyrimidine.. The enzyme catalyses 2'-deoxyribonucleotide-(2'-deoxyribose 5'-phosphate)-2'-deoxyribonucleotide-DNA = a 3'-end 2'-deoxyribonucleotide-(2,3-dehydro-2,3-deoxyribose 5'-phosphate)-DNA + a 5'-end 5'-phospho-2'-deoxyribonucleoside-DNA + H(+). Involved in base excision repair of DNA damaged by oxidation or by mutagenic agents. Acts as a DNA glycosylase that recognizes and removes damaged bases. Has a preference for oxidized purines, such as 7,8-dihydro-8-oxoguanine (8-oxoG). Has AP (apurinic/apyrimidinic) lyase activity and introduces nicks in the DNA strand. Cleaves the DNA backbone by beta-delta elimination to generate a single-strand break at the site of the removed base with both 3'- and 5'-phosphates. This is Formamidopyrimidine-DNA glycosylase from Dinoroseobacter shibae (strain DSM 16493 / NCIMB 14021 / DFL 12).